A 313-amino-acid chain; its full sequence is Pseudouridine-5'-phosphate glycosidase (313 aa).

The active-site Proton donor is Glu34. Substrate-binding residues include Lys95 and Val115. Asp147 serves as a coordination point for Mn(2+). Residue 149 to 151 (SAD) participates in substrate binding. The active-site Nucleophile is the Lys168.

This sequence belongs to the pseudouridine-5'-phosphate glycosidase family. Homotrimer. Requires Mn(2+) as cofactor.

The enzyme catalyses D-ribose 5-phosphate + uracil = psi-UMP + H2O. Catalyzes the reversible cleavage of pseudouridine 5'-phosphate (PsiMP) to ribose 5-phosphate and uracil. Functions biologically in the cleavage direction, as part of a pseudouridine degradation pathway. This is Pseudouridine-5'-phosphate glycosidase from Deinococcus radiodurans (strain ATCC 13939 / DSM 20539 / JCM 16871 / CCUG 27074 / LMG 4051 / NBRC 15346 / NCIMB 9279 / VKM B-1422 / R1).